We begin with the raw amino-acid sequence, 223 residues long: N-acetylmuramate alpha-1-phosphate uridylyltransferase (223 aa).

UTP is bound by residues 11–13 (GER) and K23. Residue N105 participates in substrate binding. Residue D107 participates in Mg(2+) binding. D140 and D205 together coordinate substrate. D205 lines the Mg(2+) pocket.

Belongs to the nucleotidyltransferase MurU family. As to quaternary structure, monomer. Mg(2+) is required as a cofactor.

It carries out the reaction N-acetyl-alpha-D-muramate 1-phosphate + UDP + H(+) = UDP-N-acetyl-alpha-D-muramate + phosphate. It participates in cell wall biogenesis; peptidoglycan recycling. Is completely inhibited by EDTA in vitro. Catalyzes the formation of UDP-N-acetylmuramate (UDP-MurNAc), a crucial precursor of the bacterial peptidoglycan cell wall, from UTP and MurNAc-alpha-1P. Is involved in peptidoglycan recycling as part of a cell wall recycling pathway that bypasses de novo biosynthesis of the peptidoglycan precursor UDP-MurNAc. Plays a role in intrinsic resistance to fosfomycin, which targets the de novo synthesis of UDP-MurNAc. Is not able to use GlcNAc-alpha-1P and GalNAc-alpha-1P as substrates. Cannot accept other nucleotide triphosphates (ATP, CTP, TTP, or GTP) than UTP. The chain is N-acetylmuramate alpha-1-phosphate uridylyltransferase from Pseudomonas putida (strain ATCC 47054 / DSM 6125 / CFBP 8728 / NCIMB 11950 / KT2440).